The following is a 439-amino-acid chain: (p)ppApp synthetase toxin Tas1 (439 aa).

The protein localises to the secreted. The catalysed reaction is AMP + ATP = adenosine 3'-diphosphate,5'-phosphate + AMP + H(+). The enzyme catalyses ADP + ATP = adenosine 3'-diphosphate,5'-diphosphate + AMP. It carries out the reaction 2 ATP = adenosine 3'-diphosphate,5'-triphosphate + AMP. In terms of biological role, type VI secretion exported toxin that pyrophosphorylates adenosine nucleotides to produce (p)ppApp. Thereby, depletes cellular ADP and ATP to dysregulate central metabolism in competitor cells. The protein is (p)ppApp synthetase toxin Tas1 (tas1) of Pseudomonas aeruginosa (strain UCBPP-PA14).